The sequence spans 385 residues: Carbohydrate diacid regulator (385 aa).

Belongs to the CdaR family.

Seems to regulate the expression of the operons for the enzymes involved in D-galactarate, D-glucarate and D-glycerate utilization. This chain is Carbohydrate diacid regulator (cdaR), found in Escherichia coli (strain K12).